Consider the following 627-residue polypeptide: Putative ankyrin repeat protein L122 (627 aa).

ANK repeat units follow at residues 61–94 (KGWT…DVHI), 98–130 (KGRT…DINS), 153–186 (HACY…DPNI), 190–223 (YGKT…NANH), 228–259 (AETV…DINH), 263–296 (IGFT…NINL), 300–333 (DGFT…DIND), 337–370 (NNVT…DLEI), 374–407 (YDWT…NVNV), 411–444 (LGHT…NPNL), 448–480 (DKNT…DSNT), and 491–523 (REYN…NYSD).

This chain is Putative ankyrin repeat protein L122, found in Acanthamoeba polyphaga (Amoeba).